A 179-amino-acid polypeptide reads, in one-letter code: Ribosome-recycling factor (179 aa).

Belongs to the RRF family.

The protein localises to the cytoplasm. In terms of biological role, responsible for the release of ribosomes from messenger RNA at the termination of protein biosynthesis. May increase the efficiency of translation by recycling ribosomes from one round of translation to another. The sequence is that of Ribosome-recycling factor from Chlamydia trachomatis serovar D (strain ATCC VR-885 / DSM 19411 / UW-3/Cx).